The chain runs to 307 residues: Probable aspartoacylase (307 aa).

2 residues coordinate Zn(2+): H13 and E16. Substrate-binding positions include R55 and 62-63; that span reads NR. H105 is a binding site for Zn(2+). Residues E163 and Y276 each contribute to the substrate site.

Belongs to the AspA/AstE family. Aspartoacylase subfamily. Requires Zn(2+) as cofactor.

The enzyme catalyses an N-acyl-L-aspartate + H2O = a carboxylate + L-aspartate. In Prochlorococcus marinus (strain SARG / CCMP1375 / SS120), this protein is Probable aspartoacylase.